A 392-amino-acid chain; its full sequence is Caveolae-associated protein 1 (392 aa).

Methionine 1 bears the N-acetylmethionine mark. Residues 1 to 10 are compositionally biased toward basic and acidic residues; it reads MEDVTLHIVE. The tract at residues 1–45 is disordered; the sequence is MEDVTLHIVERPYSGFPDASSEGPEPTQGEARATEEPSGTGSDEL. Residues 1–100 form a required for homotrimerization and for interaction with CAVIN2 and CAVIN3 region; that stretch reads MEDVTLHIVE…IQGELSKLGK (100 aa). Residues serine 21 and serine 38 each carry the phosphoserine modification. Position 40 is a phosphothreonine (threonine 40). A phosphoserine mark is found at serine 42 and serine 48. The tract at residues 54 to 64 is nuclear export signal; that stretch reads VLVLSLLDKII. Residues 55–77 are leucine-zipper 1; it reads LVLSLLDKIIGAVDQIQLTQAQL. Lysine 118 participates in a covalent cross-link: Glycyl lysine isopeptide (Lys-Gly) (interchain with G-Cter in SUMO2). Serine 120 carries the phosphoserine modification. A Glycyl lysine isopeptide (Lys-Gly) (interchain with G-Cter in SUMO2) cross-link involves residue lysine 124. Residues 138–154 are nuclear localization signal; it reads KKLEVNEAELLRRRNFK. The residue at position 158 (tyrosine 158) is a Phosphotyrosine. Lysine 163 participates in a covalent cross-link: Glycyl lysine isopeptide (Lys-Gly) (interchain with G-Cter in SUMO1); alternate. Lysine 163 is covalently cross-linked (Glycyl lysine isopeptide (Lys-Gly) (interchain with G-Cter in SUMO2); alternate). A Glycyl lysine isopeptide (Lys-Gly) (interchain with G-Cter in SUMO2) cross-link involves residue lysine 167. Residues 168 to 188 form a leucine-zipper 2 region; it reads LSVSKSLKESEALPEKEGDEL. A phosphoserine mark is found at serine 169 and serine 171. Lysine 172 participates in a covalent cross-link: Glycyl lysine isopeptide (Lys-Gly) (interchain with G-Cter in SUMO2). Residues serine 173 and serine 177 each carry the phosphoserine modification. The segment covering 173–183 has biased composition (basic and acidic residues); that stretch reads SLKESEALPEK. A disordered region spans residues 173-197; it reads SLKESEALPEKEGDELGEGERPEDD. Positions 184–197 are enriched in acidic residues; that stretch reads EGDELGEGERPEDD. Residue threonine 198 is modified to Phosphothreonine. The stretch at 201-284 forms a coiled coil; sequence IELSSDEAVE…RMNKLGTRLV (84 aa). Residues serine 204 and serine 205 each carry the phosphoserine modification. The nuclear localization signal stretch occupies residues 235-251; the sequence is KKAFSKEKMEKTKVRTR. A leucine-zipper 3 region spans residues 259-299; it reads LKTKENLEKTRHTLEKRMNKLGTRLVPVERREKLKTSRDKL. The residue at position 302 (serine 302) is a Phosphoserine. At threonine 304 the chain carries Phosphothreonine. Phosphotyrosine is present on tyrosine 310. Lysine 328 is covalently cross-linked (Glycyl lysine isopeptide (Lys-Gly) (interchain with G-Cter in SUMO2)). The disordered stretch occupies residues 347–367; it reads GPEDDEVGAERGEATDLLRGS. Serine 367, serine 368, serine 381, serine 389, and serine 391 each carry phosphoserine.

The protein belongs to the CAVIN family. In terms of assembly, component of the CAVIN complex composed of CAVIN1, CAVIN2, CAVIN3 and CAVIN4. Homotrimer. Interacts with LIPE in the adipocyte cytoplasm. Interacts with RNA polymerase I subunit POLR1A/RPA1. Interacts with TTF1. Binds the 3' end of pre-rRNA. Interacts with transcription factor ZNF148. Interacts with CAV1, CAVIN2 and CAVIN3. Interacts with CAVIN4. Post-translationally, phosphorylated. Present in active and inactive forms. Changes in phosphorylation pattern may alter activity. Phosphorylation at Tyr-158 is essential for its function in the regulation of the ribosomal transcriptional activity. Monoubiquitinated. Expressed in the heart, stomach, adipose tissue and lung (at protein level). Expressed in testis, kidney, muscle, liver, spleen and brain.

The protein localises to the membrane. It is found in the caveola. Its subcellular location is the cell membrane. The protein resides in the microsome. It localises to the endoplasmic reticulum. The protein localises to the cytoplasm. It is found in the cytosol. Its subcellular location is the mitochondrion. The protein resides in the nucleus. Plays an important role in caveolae formation and organization. Essential for the formation of caveolae in all tissues. Core component of the CAVIN complex which is essential for recruitment of the complex to the caveolae in presence of calveolin-1 (CAV1). Essential for normal oligomerization of CAV1. Promotes ribosomal transcriptional activity in response to metabolic challenges in the adipocytes and plays an important role in the formation of the ribosomal transcriptional loop. Dissociates transcription complexes paused by DNA-bound TTF1, thereby releasing both RNA polymerase I and pre-RNA from the template. The caveolae biogenesis pathway is required for the secretion of proteins such as GASK1A. In Mus musculus (Mouse), this protein is Caveolae-associated protein 1 (Cavin1).